The sequence spans 55 residues: MAKSNTIQIKLVSSADTGYFYVTKKNARAQTGKLEMRKYDPVARKHVAFREAKIK.

It belongs to the bacterial ribosomal protein bL33 family.

This chain is Large ribosomal subunit protein bL33, found in Gluconacetobacter diazotrophicus (strain ATCC 49037 / DSM 5601 / CCUG 37298 / CIP 103539 / LMG 7603 / PAl5).